A 415-amino-acid chain; its full sequence is MCLSPVKGAKLILIFLFLGAVQSNALIVNLTDSKGTCLYAEWEMNFTITYETTNQTNKTITIAVPDKATHDGSSCGDDRNSAKIMIQFGFAVSWAVNFTKEASHYSIHDIVLSYNTSDSTVFPGAVAKGVHTVKNPENFKVPLDVIFKCNSVLTYNLTPVVQKYWGIHLQAFVQNGTVSKNEQVCEEDQTPTTVAPIIHTTAPSTTTTLTPTSTPTPTPTPTPTVGNYSIRNGNTTCLLATMGLQLNITEEKVPFIFNINPATTNFTGSCQPQSAQLRLNNSQIKYLDFIFAVKNEKRFYLKEVNVYMYLANGSAFNISNKNLSFWDAPLGSSYMCNKEQVLSVSRAFQINTFNLKVQPFNVTKGQYSTAQDCSADEDNFLVPIAVGAALGGVLILVLLAYFIGLKRHHTGYEQF.

Positions 1 to 25 (MCLSPVKGAKLILIFLFLGAVQSNA) are cleaved as a signal peptide. A first lumenal domain region spans residues 26-188 (LIVNLTDSKG…SKNEQVCEED (163 aa)). The Lumenal portion of the chain corresponds to 26-379 (LIVNLTDSKG…AQDCSADEDN (354 aa)). Residues asparagine 29, asparagine 45, asparagine 54, asparagine 57, asparagine 97, asparagine 115, and asparagine 175 are each glycosylated (N-linked (GlcNAc...) asparagine). Cysteine 37 and cysteine 75 are disulfide-bonded. Cysteines 149 and 185 form a disulfide. The hinge stretch occupies residues 189-233 (QTPTTVAPIIHTTAPSTTTTLTPTSTPTPTPTPTPTVGNYSIRNG). Over residues 202-213 (APSTTTTLTPTS) the composition is skewed to low complexity. A disordered region spans residues 202–227 (APSTTTTLTPTSTPTPTPTPTPTVGN). 9 N-linked (GlcNAc...) asparagine glycosylation sites follow: asparagine 227, asparagine 234, asparagine 247, asparagine 265, asparagine 280, asparagine 312, asparagine 317, asparagine 322, and asparagine 361. A second lumenal domain region spans residues 234–379 (NTTCLLATMG…AQDCSADEDN (146 aa)). Cysteines 237 and 270 form a disulfide. A disulfide bridge links cysteine 336 with cysteine 373. The chain crosses the membrane as a helical span at residues 380–404 (FLVPIAVGAALGGVLILVLLAYFIG). The Cytoplasmic segment spans residues 405-415 (LKRHHTGYEQF). An important for binding and subsequent lysosomal degradation of target proteins region spans residues 406–409 (KRHH).

Belongs to the LAMP family. As to quaternary structure, monomer. Forms large homooligomers. Interacts (via its cytoplasmic region) with HSPA8; HSPA8 mediates recruitment of proteins with a KFERQ motif to the surface of the lysosome for chaperone-mediated autophagy. Interacts with HSP90 in the lysosome lumen; this enhances LAMP2 stability. Interacts with MLLT11. Interacts with ABCB9. Interacts with FURIN. Interacts with CT55; this interaction may be important for LAMP2 protein stability. Interacts with TMEM175; inhibiting the proton channel activity of TMEM175. Forms a ternary complex with RAB7A and RUFY4 (via RUN domain); the interaction with RAB7A is mediated by RUFY4 (via RUN and coiled coil domains). Extensively N-glycosylated. Contains a minor proportion of O-linked glycans. In terms of tissue distribution, detected in liver and kidney (at protein level). Detected in liver and kidney.

It localises to the lysosome membrane. It is found in the endosome membrane. Its subcellular location is the cytoplasmic vesicle. The protein localises to the autophagosome membrane. The protein resides in the cell membrane. Functionally, lysosomal membrane glycoprotein which plays an important role in lysosome biogenesis, lysosomal pH regulation and autophagy. Acts as an important regulator of lysosomal lumen pH regulation by acting as a direct inhibitor of the proton channel TMEM175, facilitating lysosomal acidification for optimal hydrolase activity. Plays an important role in chaperone-mediated autophagy, a process that mediates lysosomal degradation of proteins in response to various stresses and as part of the normal turnover of proteins with a long biological half-live. Functions by binding target proteins, such as GAPDH, NLRP3 and MLLT11, and targeting them for lysosomal degradation. In the chaperone-mediated autophagy, acts downstream of chaperones, such as HSPA8/HSC70, which recognize and bind substrate proteins and mediate their recruitment to lysosomes, where target proteins bind LAMP2. Plays a role in lysosomal protein degradation in response to starvation. Required for the fusion of autophagosomes with lysosomes during autophagy. Cells that lack LAMP2 express normal levels of VAMP8, but fail to accumulate STX17 on autophagosomes, which is the most likely explanation for the lack of fusion between autophagosomes and lysosomes. Required for normal degradation of the contents of autophagosomes. Required for efficient MHC class II-mediated presentation of exogenous antigens via its function in lysosomal protein degradation; antigenic peptides generated by proteases in the endosomal/lysosomal compartment are captured by nascent MHC II subunits. Is not required for efficient MHC class II-mediated presentation of endogenous antigens. The polypeptide is Lysosome-associated membrane glycoprotein 2 (Lamp2) (Mus musculus (Mouse)).